A 151-amino-acid polypeptide reads, in one-letter code: MLKGFKEFLARGNIVDLAVAVVIGTAFTALVTKFTDSIITPLINRIGVNAQSDVGILRIGIGGGQTIDLNVLLSAAINFFLIAFAVYFLVVLPYNTLRKKGEVEQPGDTQVVLLTEIRDLLAQTNGDSPGRHGGRGTPSPTDGPRASTESQ.

The next 2 helical transmembrane spans lie at 12-32 (GNIV…ALVT) and 71-91 (VLLS…FLVV). The segment at 122–151 (AQTNGDSPGRHGGRGTPSPTDGPRASTESQ) is disordered.

The protein belongs to the MscL family. As to quaternary structure, homopentamer.

It localises to the cell membrane. In terms of biological role, channel that opens in response to stretch forces in the membrane lipid bilayer. May participate in the regulation of osmotic pressure changes within the cell. In Mycobacterium tuberculosis (strain CDC 1551 / Oshkosh), this protein is Large-conductance mechanosensitive channel.